The primary structure comprises 226 residues: Glutathione peroxidase 3 (226 aa).

Positions 1–24 are cleaved as a signal peptide; that stretch reads MARLLQASCLLSLLLAGFLPQSRG. The active site involves U73. A non-standard amino acid (selenocysteine) is located at residue U73.

The protein belongs to the glutathione peroxidase family. Homotetramer. As to expression, expressed intensively in the kidney and adrenal gland, and weakly in the cerebellum, heart, and lung. Secreted in plasma.

It is found in the secreted. It carries out the reaction 2 glutathione + H2O2 = glutathione disulfide + 2 H2O. It catalyses the reaction tert-butyl hydroperoxide + 2 glutathione = tert-butanol + glutathione disulfide + H2O. Functionally, protects cells and enzymes from oxidative damage, by catalyzing the reduction of hydrogen peroxide, lipid peroxides and organic hydroperoxide, by glutathione. This Macaca fuscata fuscata (Japanese macaque) protein is Glutathione peroxidase 3.